Here is a 268-residue protein sequence, read N- to C-terminus: LOB domain-containing protein 22 (268 aa).

Residues 1-31 (MPSGKPSSVFPLHPKPTPLKPSSSTSSSNNN) form a disordered region. Positions 22–31 (SSSTSSSNNN) are enriched in low complexity. The LOB domain occupies 35–136 (QACAACKYQR…NELEIVLQQL (102 aa)).

It belongs to the LOB domain-containing protein family.

The chain is LOB domain-containing protein 22 (LBD22) from Arabidopsis thaliana (Mouse-ear cress).